A 292-amino-acid chain; its full sequence is Phosphoribosylaminoimidazole-succinocarboxamide synthase (292 aa).

The protein belongs to the SAICAR synthetase family.

The enzyme catalyses 5-amino-1-(5-phospho-D-ribosyl)imidazole-4-carboxylate + L-aspartate + ATP = (2S)-2-[5-amino-1-(5-phospho-beta-D-ribosyl)imidazole-4-carboxamido]succinate + ADP + phosphate + 2 H(+). It participates in purine metabolism; IMP biosynthesis via de novo pathway; 5-amino-1-(5-phospho-D-ribosyl)imidazole-4-carboxamide from 5-amino-1-(5-phospho-D-ribosyl)imidazole-4-carboxylate: step 1/2. This chain is Phosphoribosylaminoimidazole-succinocarboxamide synthase, found in Thermodesulfovibrio yellowstonii (strain ATCC 51303 / DSM 11347 / YP87).